We begin with the raw amino-acid sequence, 102 residues long: Iron-sulfur cluster assembly protein CyaY (102 aa).

It belongs to the frataxin family.

Involved in iron-sulfur (Fe-S) cluster assembly. May act as a regulator of Fe-S biogenesis. The protein is Iron-sulfur cluster assembly protein CyaY of Mannheimia succiniciproducens (strain KCTC 0769BP / MBEL55E).